An 800-amino-acid polypeptide reads, in one-letter code: DNA topoisomerase 1 (800 aa).

The Toprim domain maps to 1-111; that stretch reads MKLVIVESPA…VKSDDFFKRV (111 aa). Positions 7 and 80 each coordinate Mg(2+). A Topo IA-type catalytic domain is found at 132 to 568; sequence DNNLVNAQQA…FWNGFNHNIE (437 aa). Residues 166 to 171 are interaction with DNA; the sequence is SAGRVQ. Tyr-304 acts as the O-(5'-phospho-DNA)-tyrosine intermediate in catalysis. The C4-type zinc-finger motif lies at 600 to 627; it reads CPSCKTGELSLKLGKFGAFLACSNYPEC.

This sequence belongs to the type IA topoisomerase family. As to quaternary structure, monomer. Requires Mg(2+) as cofactor.

It carries out the reaction ATP-independent breakage of single-stranded DNA, followed by passage and rejoining.. In terms of biological role, releases the supercoiling and torsional tension of DNA, which is introduced during the DNA replication and transcription, by transiently cleaving and rejoining one strand of the DNA duplex. Introduces a single-strand break via transesterification at a target site in duplex DNA. The scissile phosphodiester is attacked by the catalytic tyrosine of the enzyme, resulting in the formation of a DNA-(5'-phosphotyrosyl)-enzyme intermediate and the expulsion of a 3'-OH DNA strand. The free DNA strand then undergoes passage around the unbroken strand, thus removing DNA supercoils. Finally, in the religation step, the DNA 3'-OH attacks the covalent intermediate to expel the active-site tyrosine and restore the DNA phosphodiester backbone. The sequence is that of DNA topoisomerase 1 from Rickettsia bellii (strain RML369-C).